We begin with the raw amino-acid sequence, 418 residues long: MDVAAYMTELGQQARAASREVARSSTAVRNQALLATAAALDAARSELATANSKDLERGRENGLDSAMLDRLELTSQRIDAMIEGLRQVAALPDPVGVITDMTYRPSGIQVGKMRVPLGVIGIIYESRPNVTVEAASLCLKSGNATILRGGSEAIHSNQAIARCLKQGLSEAGLPETAVQVVSTTDRAAVGELITMPQFVDVIVPRGGKGLIERISRDARVPVIKHLDGVCHVYIDSHADPEKALKVAVNAKTQRYGTCNTMETLLVDDEVAEDLLPLLAEQFRSKTVELRGCRRTCAILGDIVEATEEDWHAEYLAPILAVKVVDGLDGAIEHINRYSSQHTDSIITENYTRARRFLTEVDSSSVMVNASTRFADGFEYGLGAEIGISTDKIHARGPVGLEGLTSQKYVVFGDGHIRT.

Belongs to the gamma-glutamyl phosphate reductase family.

It localises to the cytoplasm. The catalysed reaction is L-glutamate 5-semialdehyde + phosphate + NADP(+) = L-glutamyl 5-phosphate + NADPH + H(+). It participates in amino-acid biosynthesis; L-proline biosynthesis; L-glutamate 5-semialdehyde from L-glutamate: step 2/2. Functionally, catalyzes the NADPH-dependent reduction of L-glutamate 5-phosphate into L-glutamate 5-semialdehyde and phosphate. The product spontaneously undergoes cyclization to form 1-pyrroline-5-carboxylate. The sequence is that of Gamma-glutamyl phosphate reductase from Marinobacter nauticus (strain ATCC 700491 / DSM 11845 / VT8) (Marinobacter aquaeolei).